The primary structure comprises 424 residues: Histidine--tRNA ligase (424 aa).

This sequence belongs to the class-II aminoacyl-tRNA synthetase family. As to quaternary structure, homodimer.

Its subcellular location is the cytoplasm. The enzyme catalyses tRNA(His) + L-histidine + ATP = L-histidyl-tRNA(His) + AMP + diphosphate + H(+). In Escherichia coli (strain 55989 / EAEC), this protein is Histidine--tRNA ligase.